The chain runs to 957 residues: Glycine dehydrogenase (decarboxylating) (957 aa).

Lys708 is modified (N6-(pyridoxal phosphate)lysine).

This sequence belongs to the GcvP family. The glycine cleavage system is composed of four proteins: P, T, L and H. Requires pyridoxal 5'-phosphate as cofactor.

The catalysed reaction is N(6)-[(R)-lipoyl]-L-lysyl-[glycine-cleavage complex H protein] + glycine + H(+) = N(6)-[(R)-S(8)-aminomethyldihydrolipoyl]-L-lysyl-[glycine-cleavage complex H protein] + CO2. In terms of biological role, the glycine cleavage system catalyzes the degradation of glycine. The P protein binds the alpha-amino group of glycine through its pyridoxal phosphate cofactor; CO(2) is released and the remaining methylamine moiety is then transferred to the lipoamide cofactor of the H protein. In Klebsiella pneumoniae subsp. pneumoniae (strain ATCC 700721 / MGH 78578), this protein is Glycine dehydrogenase (decarboxylating).